The following is a 251-amino-acid chain: Ubiquinone/menaquinone biosynthesis C-methyltransferase UbiE (251 aa).

S-adenosyl-L-methionine-binding positions include Thr-74, Asp-95, 123–124 (NA), and Ser-140.

It belongs to the class I-like SAM-binding methyltransferase superfamily. MenG/UbiE family.

The enzyme catalyses a 2-demethylmenaquinol + S-adenosyl-L-methionine = a menaquinol + S-adenosyl-L-homocysteine + H(+). It carries out the reaction a 2-methoxy-6-(all-trans-polyprenyl)benzene-1,4-diol + S-adenosyl-L-methionine = a 5-methoxy-2-methyl-3-(all-trans-polyprenyl)benzene-1,4-diol + S-adenosyl-L-homocysteine + H(+). The protein operates within quinol/quinone metabolism; menaquinone biosynthesis; menaquinol from 1,4-dihydroxy-2-naphthoate: step 2/2. It functions in the pathway cofactor biosynthesis; ubiquinone biosynthesis. Methyltransferase required for the conversion of demethylmenaquinol (DMKH2) to menaquinol (MKH2) and the conversion of 2-polyprenyl-6-methoxy-1,4-benzoquinol (DDMQH2) to 2-polyprenyl-3-methyl-6-methoxy-1,4-benzoquinol (DMQH2). This Proteus mirabilis (strain HI4320) protein is Ubiquinone/menaquinone biosynthesis C-methyltransferase UbiE.